A 302-amino-acid chain; its full sequence is Glycine--tRNA ligase alpha subunit (302 aa).

Belongs to the class-II aminoacyl-tRNA synthetase family. In terms of assembly, tetramer of two alpha and two beta subunits.

It is found in the cytoplasm. It catalyses the reaction tRNA(Gly) + glycine + ATP = glycyl-tRNA(Gly) + AMP + diphosphate. The polypeptide is Glycine--tRNA ligase alpha subunit (Xanthomonas campestris pv. campestris (strain 8004)).